A 402-amino-acid polypeptide reads, in one-letter code: MAHTLDSQQPAVPVRNFQINFGPQHPAAHGVLRMVLELNGEVVERVDPHIGLLHRGTEKLIEAKTYLQAVPYFDRLDYCAPMNQEHAFCLAVERLAGIEVPKRGQLIRVLYSEIGRLLSHLLNVTTFAMDVGALTPPLWGFEAREKLMMFYERASGSRMHAAYFRPGGVHQDLPQKLVEDIGEFCRTFPSLLDDLDALVTGNRIFKQRTVDIGVVTLEDALAWGFSGVMVRGSGAPWDLRRAQPYECYSELDFDIPIGKHGDCYDRYVVRMEEMRQSNKIMLQCVDRLLKEAGPVASTDRKVSPPKRGEMKRSMEALIHHFKLYTEGFHVPEGEVYAAVEAPKGEFGVYLVGDGTNKPYRCKIRAPGFAHLQSMDFLCRGHMLADVSAVLGSLDIVFGEVDR.

Belongs to the complex I 49 kDa subunit family. NDH-1 is composed of 14 different subunits. Subunits NuoB, C, D, E, F, and G constitute the peripheral sector of the complex.

It is found in the cell inner membrane. The catalysed reaction is a quinone + NADH + 5 H(+)(in) = a quinol + NAD(+) + 4 H(+)(out). NDH-1 shuttles electrons from NADH, via FMN and iron-sulfur (Fe-S) centers, to quinones in the respiratory chain. The immediate electron acceptor for the enzyme in this species is believed to be ubiquinone. Couples the redox reaction to proton translocation (for every two electrons transferred, four hydrogen ions are translocated across the cytoplasmic membrane), and thus conserves the redox energy in a proton gradient. The polypeptide is NADH-quinone oxidoreductase subunit D (Azorhizobium caulinodans (strain ATCC 43989 / DSM 5975 / JCM 20966 / LMG 6465 / NBRC 14845 / NCIMB 13405 / ORS 571)).